The sequence spans 673 residues: NADH-quinone oxidoreductase chain 3 (673 aa).

Positions 5-90 constitute a 2Fe-2S ferredoxin-type domain; that stretch reads RKIKIDDTII…PSEIRTNSPM (86 aa). The [2Fe-2S] cluster site is built by Cys37, Cys48, Cys51, and Cys66. One can recognise a 4Fe-4S His(Cys)3-ligated-type domain in the interval 90-129; the sequence is MVKKAREGVMEFLLINHPLDCPICDQGGECDLQDQAMAYG. [4Fe-4S] cluster is bound by residues His106, Cys110, Cys113, Cys119, Cys158, Cys161, Cys164, and Cys208. The region spanning 227–283 is the 4Fe-4S Mo/W bis-MGD-type domain; sequence LTKTESIDVMDALGSSIRIDTKGREVMRILPRNHDGVNEEWISDKTRFVWDGLRRQR.

Belongs to the complex I 75 kDa subunit family. NDH-1 is composed of at least 14 different subunits, Nqo1 to Nqo14. The complex has a L-shaped structure, with the hydrophobic arm (subunits Nqo7, Nqo8, Nqo10 to Nqo14) embedded in the inner membrane and the hydrophilic peripheral arm (subunits Nqo1 to Nqo6, Nqo9) protruding into the bacterial cytoplasm. The hydrophilic domain contains all the redox centers. [2Fe-2S] cluster serves as cofactor. Requires [4Fe-4S] cluster as cofactor.

It localises to the cell inner membrane. It catalyses the reaction a quinone + NADH + 5 H(+)(in) = a quinol + NAD(+) + 4 H(+)(out). NDH-1 shuttles electrons from NADH, via FMN and iron-sulfur (Fe-S) centers, to quinones in the respiratory chain. The immediate electron acceptor for the enzyme in this species is believed to be ubiquinone. Couples the redox reaction to proton translocation (for every two electrons transferred, four hydrogen ions are translocated across the cytoplasmic membrane), and thus conserves the redox energy in a proton gradient. The sequence is that of NADH-quinone oxidoreductase chain 3 from Paracoccus denitrificans.